The sequence spans 540 residues: Putative rhamnogalacturonase (540 aa).

The first 23 residues, 1-23 (MGFLTLFHMAFLAVSLFVSGALA), serve as a signal peptide directing secretion. Disulfide bonds link Cys-53–Cys-100 and Cys-192–Cys-203. N-linked (GlcNAc...) asparagine glycosylation occurs at Asn-89. N-linked (GlcNAc...) asparagine glycosylation occurs at Asn-368.

Belongs to the polysaccharide lyase 4 family.

Its subcellular location is the secreted. The catalysed reaction is Endotype eliminative cleavage of L-alpha-rhamnopyranosyl-(1-&gt;4)-alpha-D-galactopyranosyluronic acid bonds of rhamnogalacturonan I domains in ramified hairy regions of pectin leaving L-rhamnopyranose at the reducing end and 4-deoxy-4,5-unsaturated D-galactopyranosyluronic acid at the non-reducing end.. In terms of biological role, could be a pectinolytic enzyme that hydrolyzes the alpha-L-rhamnopyranosyl-(1,4)-alpha-D-galacturonopyranosyl glycosidic linkage by beta-elimination, thereby generating oligosaccharides terminating at the non-reducing end with a hex-4-enopyranosyluronic acid residue. The protein is Putative rhamnogalacturonase (asd-1) of Neurospora crassa (strain ATCC 24698 / 74-OR23-1A / CBS 708.71 / DSM 1257 / FGSC 987).